Here is a 311-residue protein sequence, read N- to C-terminus: Regulator of rDNA transcription protein 6 (311 aa).

2 helical membrane-spanning segments follow: residues 32 to 52 and 271 to 291; these read PHLL…SAEL and YLIV…IIVT.

The protein localises to the membrane. In terms of biological role, may be involved in the modulation of rDNA transcription. The chain is Regulator of rDNA transcription protein 6 (RRT6) from Saccharomyces cerevisiae (strain ATCC 204508 / S288c) (Baker's yeast).